Consider the following 320-residue polypeptide: Prophage side tail fiber protein homolog StfQ (320 aa).

Disordered regions lie at residues 147-213 and 241-270; these read SGRA…HKSS and TTSGSGQTRNAGKTSSDGAHTHSLSGTAAS. Composition is skewed to polar residues over residues 172–206 and 241–258; these read DLGTETTSSFDYGTKSTNNTGAHTHSISGTANSAG and TTSGSGQTRNAGKTSSDG. Over residues 261–270 the composition is skewed to low complexity; it reads THSLSGTAAS.

Belongs to the tail fiber family.

This chain is Prophage side tail fiber protein homolog StfQ (stfQ), found in Escherichia coli (strain K12).